The sequence spans 485 residues: Trk system potassium uptake protein TrkH (485 aa).

Topologically, residues 1–2 (MQ) are cytoplasmic. A helical transmembrane segment spans residues 3 to 29 (FRSIIRIVGLLLALFSVTMLAPALVAL). Topologically, residues 30 to 35 (LYRDGA) are periplasmic. Residues 36–57 (GVPFVTTFFVLLFCGAMCWFPN) form a helical membrane-spanning segment. Over 58–65 (RRHKHELK) the chain is Cytoplasmic. Residues 66–90 (SRDGFLIVVLFWTVLGSAGSLPFLI) traverse the membrane as a helical segment. Residues 98 to 109 (VTDAFFESFSAL) constitute an intramembrane region (helical; Pore-forming). An intramembrane segment occupies 110 to 115 (TTTGAT). The selectivity filter part 1 stretch occupies residues 110 to 115 (TTTGAT). T111 and T112 together coordinate K(+). The Periplasmic portion of the chain corresponds to 116-124 (VIVGLDELP). The helical transmembrane segment at 125 to 150 (KAILFYRQFLQWFGGMGIIVLAVAIL) threads the bilayer. Residues 151–177 (PVLGIGGMQLYRAEIPGPVKDTKMTPR) lie on the Cytoplasmic side of the membrane. The helical transmembrane segment at 178–202 (IAETAKALWYIYLSLTIACAVAFWL) threads the bilayer. The Periplasmic portion of the chain corresponds to 203-205 (AGM). T206 is an intramembrane region. Residues 207–218 (PFDAISHSFSTI) constitute an intramembrane region (helical; Pore-forming). The stretch at 219–224 (AIGGFS) is an intramembrane region. Residues 219–224 (AIGGFS) form a selectivity filter part 2 region. Residues I220 and G221 each coordinate K(+). At 225–234 (THDASMGYFD) the chain is on the periplasmic side. Residues 235–250 (SYAINLITVVFLLISA) constitute an intramembrane region (helical). The chain crosses the membrane as a helical span at residues 276-296 (FRAFIFIQVLLFLVCFLLLLK). The segment at residues 303-318 (PYDAFDQALFQTVSIS) is an intramembrane region (helical; Pore-forming). Residues 319 to 324 (TTAGFT) lie within the membrane without spanning it. Residues 319-324 (TTAGFT) form a selectivity filter part 3 region. Positions 320 and 321 each coordinate K(+). At 325 to 332 (TTGFADWP) the chain is on the periplasmic side. An intramembrane region (helical) is located at residues 333 to 344 (LFLPVLLLFSSF). Positions 345–357 (IGGCAGSTGGGMK) form an intramembrane region, note=Loop between two helices. The helical transmembrane segment at 392–419 (PQRVVDAVWGFFSAYALVFVVCMLGLIA) threads the bilayer. The Periplasmic portion of the chain corresponds to 420–421 (TG). An intramembrane segment occupies 422 to 423 (MD). The segment at residues 424 to 434 (ELSAFSAVAAT) is an intramembrane region (helical; Pore-forming). An intramembrane segment occupies 435–441 (LNNLGPG). The selectivity filter part 4 stretch occupies residues 436 to 441 (NNLGPG). The K(+) site is built by N437 and L438. The Periplasmic segment spans residues 442–453 (LGEVALHFGDVN). The helical intramembrane region spans 454–465 (DKAKWVLIVSML).

It belongs to the TrkH potassium transport family. Homodimer.

The protein localises to the cell inner membrane. In terms of biological role, low-affinity potassium transport system. Interacts with trk system potassium uptake protein TrkA and requires TrkE for transport activity. Selective for permeation of potassium ion and rubidium ion over smaller ions such as natrium or litium. The protein is Trk system potassium uptake protein TrkH of Vibrio parahaemolyticus serotype O3:K6 (strain RIMD 2210633).